The chain runs to 382 residues: L-lysine 4-hydroxylase (382 aa).

Residues histidine 182, glutamate 184, and histidine 318 each coordinate Fe cation.

It belongs to the clavaminate synthase family. Fe(2+) is required as a cofactor.

The catalysed reaction is L-lysine + 2-oxoglutarate + O2 = (4R)-4-hydroxy-L-lysine + succinate + CO2. In terms of biological role, alpha-ketoglutarate-dependent dioxygenase that in vitro catalyzes the regio- and stereoselective hydroxylation of L-lysine, leading to (4R)-4-hydroxy-L-lysine. Cannot use D-lysine or L-ornithine as substrate. This is L-lysine 4-hydroxylase from Chitinophaga pinensis (strain ATCC 43595 / DSM 2588 / LMG 13176 / NBRC 15968 / NCIMB 11800 / UQM 2034).